A 411-amino-acid chain; its full sequence is Putative nickel insertion protein (411 aa).

This sequence belongs to the LarC family.

The polypeptide is Putative nickel insertion protein (Methanothermobacter thermautotrophicus (strain ATCC 29096 / DSM 1053 / JCM 10044 / NBRC 100330 / Delta H) (Methanobacterium thermoautotrophicum)).